The chain runs to 166 residues: Crossover junction endodeoxyribonuclease RuvC (166 aa).

Active-site residues include aspartate 7, glutamate 67, and aspartate 139. Residues aspartate 7, glutamate 67, and aspartate 139 each coordinate Mg(2+).

This sequence belongs to the RuvC family. In terms of assembly, homodimer which binds Holliday junction (HJ) DNA. The HJ becomes 2-fold symmetrical on binding to RuvC with unstacked arms; it has a different conformation from HJ DNA in complex with RuvA. In the full resolvosome a probable DNA-RuvA(4)-RuvB(12)-RuvC(2) complex forms which resolves the HJ. Mg(2+) is required as a cofactor.

It localises to the cytoplasm. It carries out the reaction Endonucleolytic cleavage at a junction such as a reciprocal single-stranded crossover between two homologous DNA duplexes (Holliday junction).. Functionally, the RuvA-RuvB-RuvC complex processes Holliday junction (HJ) DNA during genetic recombination and DNA repair. Endonuclease that resolves HJ intermediates. Cleaves cruciform DNA by making single-stranded nicks across the HJ at symmetrical positions within the homologous arms, yielding a 5'-phosphate and a 3'-hydroxyl group; requires a central core of homology in the junction. The consensus cleavage sequence is 5'-(A/T)TT(C/G)-3'. Cleavage occurs on the 3'-side of the TT dinucleotide at the point of strand exchange. HJ branch migration catalyzed by RuvA-RuvB allows RuvC to scan DNA until it finds its consensus sequence, where it cleaves and resolves the cruciform DNA. The polypeptide is Crossover junction endodeoxyribonuclease RuvC (Paramagnetospirillum magneticum (strain ATCC 700264 / AMB-1) (Magnetospirillum magneticum)).